A 98-amino-acid chain; its full sequence is Large ribosomal subunit protein uL23 (98 aa).

It belongs to the universal ribosomal protein uL23 family. As to quaternary structure, part of the 50S ribosomal subunit. Contacts protein L29, and trigger factor when it is bound to the ribosome.

Its function is as follows. One of the early assembly proteins it binds 23S rRNA. One of the proteins that surrounds the polypeptide exit tunnel on the outside of the ribosome. Forms the main docking site for trigger factor binding to the ribosome. The chain is Large ribosomal subunit protein uL23 from Bifidobacterium animalis subsp. lactis (strain AD011).